Here is a 100-residue protein sequence, read N- to C-terminus: Urease subunit gamma (100 aa).

It belongs to the urease gamma subunit family. In terms of assembly, heterotrimer of UreA (gamma), UreB (beta) and UreC (alpha) subunits. Three heterotrimers associate to form the active enzyme.

The protein localises to the cytoplasm. The catalysed reaction is urea + 2 H2O + H(+) = hydrogencarbonate + 2 NH4(+). The protein operates within nitrogen metabolism; urea degradation; CO(2) and NH(3) from urea (urease route): step 1/1. In Rhodopseudomonas palustris (strain BisB18), this protein is Urease subunit gamma.